Reading from the N-terminus, the 1077-residue chain is FKBP12-associated protein 1 homolog (1077 aa).

Residues 1-173 (METSKNPSDL…MPKNSKEIKK (173 aa)) are disordered. Residues 15–29 (ANVKKNRRRFQKSQK) show a composition bias toward basic residues. Serine 33 is subject to Phosphoserine. The span at 52-64 (EEVKTSLKEDSSK) shows a compositional bias: basic and acidic residues. Polar residues predominate over residues 76 to 87 (PTSSVQLNVSKN). The segment covering 100–116 (SSKDEELRKHAKGEGKR) has biased composition (basic and acidic residues). A compositionally biased stretch (low complexity) spans 136–149 (SSNSSQETSSSKGS). The segment covering 153-173 (KSERSREAKSRMPKNSKEIKK) has biased composition (basic and acidic residues). Residues 197–247 (CSVCTDTINPSTSIWSCGTCYHVFHLSCIRKWCKNSIEQRNEDAWRCPYCQ) form an RING-type; atypical zinc finger. NF-X1-type zinc fingers lie at residues 290 to 308 (CEHPCPLLCHPGPCPPCTA), 348 to 367 (CGEHTCKKRCHSGLCGACFE), 420 to 441 (CGLHKCSKTCHPISETRAHCPF), 485 to 503 (CGHRCKYKCHLGSCGTCSE), 541 to 558 (CGRHQCNKKCCSGYSKAQ), 595 to 614 (CGNHFCQHMCHRGPCPRCLE), 708 to 729 (CKTHFCEKLCHPDGECESSCKK), and 738 to 760 (CEHVCQSPCHAGHPCDERIPCKA). The R3H domain maps to 835–897 (SDFADEVESL…KRNVMVYNKG (63 aa)).

Belongs to the NFX1 family.

The protein resides in the cytoplasm. The protein localises to the golgi apparatus. Its subcellular location is the nucleus. May play a role in transcription regulation. This chain is FKBP12-associated protein 1 homolog (fap1), found in Schizosaccharomyces pombe (strain 972 / ATCC 24843) (Fission yeast).